We begin with the raw amino-acid sequence, 728 residues long: Glutamate--cysteine ligase (728 aa).

The segment at 517–552 (PVRTTRRGGSASRSASGTSTPNSGSSRPATPPLGPV) is disordered. Over residues 523 to 536 (RGGSASRSASGTST) the composition is skewed to low complexity.

It belongs to the glutamate--cysteine ligase type 3 family.

The catalysed reaction is L-cysteine + L-glutamate + ATP = gamma-L-glutamyl-L-cysteine + ADP + phosphate + H(+). It functions in the pathway sulfur metabolism; glutathione biosynthesis; glutathione from L-cysteine and L-glutamate: step 1/2. The chain is Glutamate--cysteine ligase (gcs-1) from Neurospora crassa (strain ATCC 24698 / 74-OR23-1A / CBS 708.71 / DSM 1257 / FGSC 987).